The following is a 379-amino-acid chain: Ribosomal RNA small subunit methyltransferase H (379 aa).

S-adenosyl-L-methionine-binding positions include 71–73 (GGH), glutamate 90, aspartate 157, and histidine 164.

This sequence belongs to the methyltransferase superfamily. RsmH family.

Its subcellular location is the cytoplasm. It carries out the reaction cytidine(1402) in 16S rRNA + S-adenosyl-L-methionine = N(4)-methylcytidine(1402) in 16S rRNA + S-adenosyl-L-homocysteine + H(+). In terms of biological role, specifically methylates the N4 position of cytidine in position 1402 (C1402) of 16S rRNA. This is Ribosomal RNA small subunit methyltransferase H from Treponema pallidum (strain Nichols).